Reading from the N-terminus, the 487-residue chain is Malonate-semialdehyde dehydrogenase 2 (487 aa).

NAD(+) is bound by residues phenylalanine 154, lysine 178, glutamate 181, arginine 182, and serine 231. Residue cysteine 286 is the Nucleophile of the active site. Glutamate 386 is an NAD(+) binding site.

Belongs to the aldehyde dehydrogenase family. IolA subfamily. Homotetramer.

It catalyses the reaction 3-oxopropanoate + NAD(+) + CoA + H2O = hydrogencarbonate + acetyl-CoA + NADH + H(+). The enzyme catalyses 2-methyl-3-oxopropanoate + NAD(+) + CoA + H2O = propanoyl-CoA + hydrogencarbonate + NADH + H(+). It functions in the pathway polyol metabolism; myo-inositol degradation into acetyl-CoA; acetyl-CoA from myo-inositol: step 7/7. In terms of biological role, catalyzes the oxidation of malonate semialdehyde (MSA) and methylmalonate semialdehyde (MMSA) into acetyl-CoA and propanoyl-CoA, respectively. Is involved in a myo-inositol catabolic pathway. Bicarbonate, and not CO2, is the end-product of the enzymatic reaction. In Bacillus thuringiensis subsp. konkukian (strain 97-27), this protein is Malonate-semialdehyde dehydrogenase 2.